We begin with the raw amino-acid sequence, 538 residues long: Lipid scramblase CLPTM1L (538 aa).

The Cytoplasmic portion of the chain corresponds to M1–S9. A helical membrane pass occupies residues L10 to V30. Residues Y31 to L284 lie on the Extracellular side of the membrane. N90 and N100 each carry an N-linked (GlcNAc...) asparagine glycan. A disordered region spans residues I140 to P166. An N-linked (GlcNAc...) asparagine glycan is attached at N229. The helical transmembrane segment at Y285–F305 threads the bilayer. The Cytoplasmic segment spans residues K306 to K324. A helical membrane pass occupies residues A325–L341. Over D342 to K402 the chain is Extracellular. The chain crosses the membrane as a helical span at residues Y403–V423. Topologically, residues K424–W428 are cytoplasmic. The chain crosses the membrane as a helical span at residues Y429–L449. Topologically, residues P450 to D538 are extracellular.

This sequence belongs to the CLPTM1 family.

The protein localises to the endoplasmic reticulum membrane. The catalysed reaction is a 6-(alpha-D-glucosaminyl)-1-(1,2-diacyl-sn-glycero-3-phospho)-1D-myo-inositol(in) = a 6-(alpha-D-glucosaminyl)-1-(1,2-diacyl-sn-glycero-3-phospho)-1D-myo-inositol(out). It carries out the reaction 6-(alpha-D-glucosaminyl)-(1-octadecanoyl,2-(9Z)-octadecenoyl-sn-glycero-3-phospho)-1D-myo-inositol(in) = 6-(alpha-D-glucosaminyl)-(1-octadecanoyl,2-(9Z)-octadecenoyl-sn-glycero-3-phospho)-1D-myo-inositol(out). The enzyme catalyses a 1,2-diacyl-sn-glycero-3-phospho-(1D-myo-inositol)(in) = a 1,2-diacyl-sn-glycero-3-phospho-(1D-myo-inositol)(out). It catalyses the reaction a 1,2-diacyl-sn-glycero-3-phosphocholine(in) = a 1,2-diacyl-sn-glycero-3-phosphocholine(out). The catalysed reaction is a 1,2-diacyl-sn-glycero-3-phosphoethanolamine(in) = a 1,2-diacyl-sn-glycero-3-phosphoethanolamine(out). Functionally, scramblase that mediates the translocation of glucosaminylphosphatidylinositol (alpha-D-GlcN-(1-6)-(1,2-diacyl-sn-glycero-3-phospho)-1D-myo-inositol, GlcN-PI) across the endoplasmic reticulum (ER) membrane, from the cytosolic leaflet to the luminal leaflet of the ER membrane, where it participates in the biosynthesis of glycosylphosphatidylinositol (GPI). GPI is a lipid glycoconjugate involved in post-translational modification of proteins. Can also translocate 1,2-diacyl-sn-glycero-3-phospho-(1D-myo-inositol) (phosphatidylinositol or PI), as well as several other phospholipids (1,2-diacyl-sn-glycero-3-phosphocholine, 1,2-diacyl-sn-glycero-3-phosphoethanolamine), and N-acetylglucosaminylphosphatidylinositol (GlcNAc-PI) in vitro. This Danio rerio (Zebrafish) protein is Lipid scramblase CLPTM1L (clptm1l).